Reading from the N-terminus, the 354-residue chain is 3-isopropylmalate dehydrogenase (354 aa).

73–86 (GPAYDKLDRPLRPE) lines the NAD(+) pocket. Positions 93, 103, 131, and 221 each coordinate substrate. Mg(2+)-binding residues include Asp221, Asp245, and Asp249. An NAD(+)-binding site is contributed by 279–291 (GSAPDIAGQNLAN).

Belongs to the isocitrate and isopropylmalate dehydrogenases family. LeuB type 1 subfamily. As to quaternary structure, homodimer. It depends on Mg(2+) as a cofactor. Mn(2+) is required as a cofactor.

It localises to the cytoplasm. The enzyme catalyses (2R,3S)-3-isopropylmalate + NAD(+) = 4-methyl-2-oxopentanoate + CO2 + NADH. It functions in the pathway amino-acid biosynthesis; L-leucine biosynthesis; L-leucine from 3-methyl-2-oxobutanoate: step 3/4. Catalyzes the oxidation of 3-carboxy-2-hydroxy-4-methylpentanoate (3-isopropylmalate) to 3-carboxy-4-methyl-2-oxopentanoate. The product decarboxylates to 4-methyl-2 oxopentanoate. In Chromobacterium violaceum (strain ATCC 12472 / DSM 30191 / JCM 1249 / CCUG 213 / NBRC 12614 / NCIMB 9131 / NCTC 9757 / MK), this protein is 3-isopropylmalate dehydrogenase.